The primary structure comprises 500 residues: L-arabinose isomerase (500 aa).

Residues Glu-306, Glu-333, His-350, and His-450 each coordinate Mn(2+).

It belongs to the arabinose isomerase family. As to quaternary structure, homohexamer. Requires Mn(2+) as cofactor.

The enzyme catalyses beta-L-arabinopyranose = L-ribulose. It participates in carbohydrate degradation; L-arabinose degradation via L-ribulose; D-xylulose 5-phosphate from L-arabinose (bacterial route): step 1/3. Functionally, catalyzes the conversion of L-arabinose to L-ribulose. The polypeptide is L-arabinose isomerase (Salmonella typhi).